Reading from the N-terminus, the 65-residue chain is MPKIKTVRGAAKRFKKTGKGGFKHKRANLRHILTKKATKRKRHLRPKAMVSKGDLGLVIACLPYA.

It belongs to the bacterial ribosomal protein bL35 family.

This is Large ribosomal subunit protein bL35 from Enterobacter sp. (strain 638).